Reading from the N-terminus, the 528-residue chain is (R)-citramalate synthase (528 aa).

The Pyruvate carboxyltransferase domain maps to 4-266 (VKLYDTTLRD…RECIGDDQLR (263 aa)).

This sequence belongs to the alpha-IPM synthase/homocitrate synthase family.

It carries out the reaction pyruvate + acetyl-CoA + H2O = (3R)-citramalate + CoA + H(+). The protein operates within amino-acid biosynthesis; L-isoleucine biosynthesis; 2-oxobutanoate from pyruvate: step 1/3. Functionally, catalyzes the condensation of pyruvate and acetyl-coenzyme A to form (R)-citramalate. Makes part of the main pathway for isoleucine biosynthesis in G.sulfurreducens, i.e. the citramalate-dependent pathway. The polypeptide is (R)-citramalate synthase (Geobacter sulfurreducens (strain ATCC 51573 / DSM 12127 / PCA)).